A 300-amino-acid chain; its full sequence is MEFWGLEVKPGSTVKCEPGYGFVLHLSQAALGESKKSDNALMYVKIDDQKLAIGTLSVDKNPHIQFDLIFDKEFELSHTSKTTSVFFTGYKVEQPFEEDEMDLDSEDEDEELNVPAVKENGKADEKKQKSQEKAVAAPSKSSPDSKKSKDDDDSDEDETDDSDEDETDDSDEGLSPEEGDDDSSDEDDTSDDEEEDTPTPKKPEVGKKRAAESSVLKTPLSDKKAKVATPSSQKTGGKKGAAVHVATPHPAKGKTIVNNDKSVKSPKSAPKSGVPCKSCSKSFISETAPQAHSKAKHGGK.

Positions 98–112 are enriched in acidic residues; sequence EDEMDLDSEDEDEEL. Residues 98-300 form a disordered region; it reads EDEMDLDSED…AHSKAKHGGK (203 aa). Residues 119–132 are compositionally biased toward basic and acidic residues; sequence ENGKADEKKQKSQE. Acidic residues predominate over residues 151–197; it reads DDDSDEDETDDSDEDETDDSDEGLSPEEGDDDSSDEDDTSDDEEEDT. The segment covering 198–211 has biased composition (basic and acidic residues); the sequence is PTPKKPEVGKKRAA. A compositionally biased stretch (low complexity) spans 265-275; sequence SPKSAPKSGVP. The segment at 274–297 adopts a C2H2-type zinc-finger fold; sequence VPCKSCSKSFISETAPQAHSKAKH. Residues 279–290 are compositionally biased toward polar residues; the sequence is CSKSFISETAPQ.

Belongs to the histone deacetylase HD2 family. In terms of assembly, multimer. Possibly forms a homotrimer with HDT1 and/or HDT2.

Its subcellular location is the nucleus. The protein resides in the nucleolus. In terms of biological role, mediates the deacetylation of lysine residues on the N-terminal part of the core histones (H2A, H2B, H3 and H4). Histone deacetylation gives a tag for epigenetic repression and plays an important role in transcriptional regulation, cell cycle progression and developmental events. The chain is Histone deacetylase HDT3 (HDT3) from Zea mays (Maize).